The sequence spans 264 residues: Thymidylate synthase 2 (264 aa).

Residue Arg-21 coordinates dUMP. Position 51 (His-51) interacts with (6R)-5,10-methylene-5,6,7,8-tetrahydrofolate. Arg-126–Arg-127 provides a ligand contact to dUMP. Residue Cys-146 is the Nucleophile of the active site. DUMP-binding positions include Arg-166–Asp-169, Asn-177, and His-207–Tyr-209. A (6R)-5,10-methylene-5,6,7,8-tetrahydrofolate-binding site is contributed by Asp-169. Ser-263 is a binding site for (6R)-5,10-methylene-5,6,7,8-tetrahydrofolate.

This sequence belongs to the thymidylate synthase family. Bacterial-type ThyA subfamily. In terms of assembly, homodimer.

It is found in the cytoplasm. It carries out the reaction dUMP + (6R)-5,10-methylene-5,6,7,8-tetrahydrofolate = 7,8-dihydrofolate + dTMP. The protein operates within pyrimidine metabolism; dTTP biosynthesis. In terms of biological role, catalyzes the reductive methylation of 2'-deoxyuridine-5'-monophosphate (dUMP) to 2'-deoxythymidine-5'-monophosphate (dTMP) while utilizing 5,10-methylenetetrahydrofolate (mTHF) as the methyl donor and reductant in the reaction, yielding dihydrofolate (DHF) as a by-product. This enzymatic reaction provides an intracellular de novo source of dTMP, an essential precursor for DNA biosynthesis. This chain is Thymidylate synthase 2, found in Bacillus subtilis (strain 168).